We begin with the raw amino-acid sequence, 440 residues long: MFLPQEIIRKKRDGHALSDEEIRSFINGVRDNSVSEGQIAALAMAIWFRDITLPERVALTMAMRDSGSVLCWKGLDLNGPVVDKHSTGGVGDVTSLMLGPMVAACGGYVPMISGRGLGHTGGTLDKLEAIPGFDIFPSDDRFREIIKQVGIAIVGQTRSLAPADKRFYATRDITATVDSIPLIAASILGKKLAEGLDALVMDVKVGSGALMPTLEQSEALAQAIFGVANGAGCKTTVLLTDMNQPLASSAGNALEVREAVQFLTGEYRNPRLLEVTMALCREMLLSGGLAQSDAEAQAKLQAVLDNGAAAEAFARMVAAQQGPADFIERIDSYLPAPMLSKAVYATTSGIVSTMDTRALGMAVVALGGGRRRASDSIDYSVGLSHLVQPGDKVDGERPLAVIHAASEASWQQAAQAVQHAVMVGQQQPASTAVIYRRISQ.

This sequence belongs to the thymidine/pyrimidine-nucleoside phosphorylase family. In terms of assembly, homodimer.

The enzyme catalyses thymidine + phosphate = 2-deoxy-alpha-D-ribose 1-phosphate + thymine. It participates in pyrimidine metabolism; dTMP biosynthesis via salvage pathway; dTMP from thymine: step 1/2. The enzymes which catalyze the reversible phosphorolysis of pyrimidine nucleosides are involved in the degradation of these compounds and in their utilization as carbon and energy sources, or in the rescue of pyrimidine bases for nucleotide synthesis. This Erwinia tasmaniensis (strain DSM 17950 / CFBP 7177 / CIP 109463 / NCPPB 4357 / Et1/99) protein is Thymidine phosphorylase.